The chain runs to 943 residues: Protein translocase subunit SecA (943 aa).

ATP is bound by residues glutamine 90, 108–112 (GEGKT), and aspartate 509. The tract at residues 535–560 (PNNEHKPPIPKQRSSKSKGGFSSKVG) is disordered. Positions 551–560 (SKGGFSSKVG) are enriched in low complexity.

It belongs to the SecA family. As to quaternary structure, monomer and homodimer. Part of the essential Sec protein translocation apparatus which comprises SecA, SecYEG and auxiliary proteins SecDF. Other proteins may also be involved.

It is found in the cell inner membrane. The protein resides in the cellular thylakoid membrane. The protein localises to the cytoplasm. The catalysed reaction is ATP + H2O + cellular proteinSide 1 = ADP + phosphate + cellular proteinSide 2.. Functionally, part of the Sec protein translocase complex. Interacts with the SecYEG preprotein conducting channel. Has a central role in coupling the hydrolysis of ATP to the transfer of proteins into and across the cell membrane, serving as an ATP-driven molecular motor driving the stepwise translocation of polypeptide chains across the membrane. In terms of biological role, probably participates in protein translocation into and across both the cytoplasmic and thylakoid membranes in cyanobacterial cells. The chain is Protein translocase subunit SecA from Prochlorococcus marinus (strain MIT 9312).